A 436-amino-acid chain; its full sequence is Trigger factor (436 aa).

One can recognise a PPIase FKBP-type domain in the interval 161 to 246 (GMRVTMDFIG…LIKVEEQILP (86 aa)).

This sequence belongs to the FKBP-type PPIase family. Tig subfamily.

The protein resides in the cytoplasm. It carries out the reaction [protein]-peptidylproline (omega=180) = [protein]-peptidylproline (omega=0). Involved in protein export. Acts as a chaperone by maintaining the newly synthesized protein in an open conformation. Functions as a peptidyl-prolyl cis-trans isomerase. In Aeromonas salmonicida (strain A449), this protein is Trigger factor.